An 89-amino-acid polypeptide reads, in one-letter code: Small ribosomal subunit protein uS15 (89 aa).

It belongs to the universal ribosomal protein uS15 family. Part of the 30S ribosomal subunit. Forms a bridge to the 50S subunit in the 70S ribosome, contacting the 23S rRNA.

Functionally, one of the primary rRNA binding proteins, it binds directly to 16S rRNA where it helps nucleate assembly of the platform of the 30S subunit by binding and bridging several RNA helices of the 16S rRNA. Its function is as follows. Forms an intersubunit bridge (bridge B4) with the 23S rRNA of the 50S subunit in the ribosome. This is Small ribosomal subunit protein uS15 from Polynucleobacter necessarius subsp. necessarius (strain STIR1).